The sequence spans 791 residues: MASSTKVSLRRPPRPQVMYSLKPKVVEFDKVWVQLRPSIIDIINLRPITNVQWHHKFSDVYDICVSIPTPLSERLYNEVKACIQEHVRQKRQDIVDVDPDLLLQEYHKMWRVFHEGAIFIHRLFGYLNKQFVKQKRCTDLDNFAQYAAFLQIPDVKEIGCLALEIWKEDLVKTILPQLVKLLLIAIDNDRKGNFPHIANEVSGVINSFVKMEETDFDVVPAEGARYKARESTTAFYQESFEKPLLTDTEQYYSALAQKMLTDLSCSEYMEQVIVLLEQEEMRAKKYLHESSVEKVITLCQKVMIKAHKDKLHAVCHDLITNEENKDLRNMYRLLKPIQAGLSVMVKEFEEYVKKKGLEAVSRLTGENVPQQFVENVLRVYNKFNDMKTAVFMDDGEFSSGLDKALQGVVNSKEPGQSVPKASERLARYTDGLLKKSTKGLSETDLEAKLDSAIVIFRYIEDKDIFQKFYSKMLANRLIASTSISMDAEELMINKLKQACGYEFTSKLSRMFTDIGLSQELSNNFDKHIADIKTVQPDVKFVPTQTMILQAGSWPLNAPQLSTNSNNQTAQDVANFHLPRILQPVIQEFEKFYTGKHNGRKLTWLFNMSQGDVRLTYLDKQYVAQMYVYQMAALLCFERRDAILVKDIGEEIGVSGDYLLKTIRTILDVTLLTCDDQNLTADSLVRLNMSMTSKRMKFRLQAPQVNKAVEKEQEAVANTVSQDRKYYMECAIVRIMKTRKVLKHNALVTEIMDQTKGRFSPDVPFIKKSIEDLIEKMYIQRTDQNDEYQYLA.

The Cullin neddylation domain occupies Asp722–Asn784. A Glycyl lysine isopeptide (Lys-Gly) (interchain with G-Cter in NEDD8) cross-link involves residue Lys736.

The protein belongs to the cullin family. Component of multiple CBC (Cul2-ElonginB-ElonginC) E3 ubiquitin-protein ligase complexes formed of cul-2, elb-1, elc-1, rbx-1 and a variable substrate recognition component. Component of the CBC(fem-1) E3 ubiquitin-protein ligase complex with fem-1, fem-2 and fem-3. The CBC(fem-1) complex interacts with tra-1 and promotes tra-1 degradation. Probable component of the CBC(lrr-1) E3 ubiquitin-protein ligase complex incuding cul-2, elb-1, elc-1, rbx-1 and lrr-1. The CBC(lrr-1) complex interacts with the DNA replisome complex at the end of S phase; the interaction promotes the release of components of the CMG helicase complex (a component of the replisome) from chromatin. Probable component of an CBC(zif-1) E3 ubiquitin-protein ligase including cul-2, elc-1, rbx-1 and zif-1. Part of an E3 ubiquitin-protein ligase complex including cul-2, elc-1 and zyg-11. Interacts with Skp1-related protein skr-10. Post-translationally, neddylated; which enhances the ubiquitination activity of CBC (Cul2-ElonginB-ElonginC) E3 ubiquitin-protein ligase complexes. In terms of tissue distribution, in adults, highly expressed in meiotic cells and oocytes. In larvae, expressed in many proliferating cell types: P cells during the L1 stage; seam cells when they divide at every molt; vulval and somatic gonad cells in late L3 and L4 stages; and intestinal cells throughout larval development.

The protein localises to the cytoplasm. The protein resides in the nucleus. It participates in protein modification; protein ubiquitination. In terms of biological role, core component of multiple cullin-RING-based CBC (Cul2-ElonginB-ElonginC) E3 ubiquitin-protein ligase complexes which mediate the ubiquitination and subsequent proteasomal degradation of target proteins. As a scaffold protein may contribute to catalysis through positioning of the substrate and the ubiquitin-conjugating enzyme. The functional specificity of the CBC complex depends on the variable substrate recognition component. May function in ubiquitin-mediated degradation of CKIs to target cki-1 for degradation. CBC(zif-1) may ensure germline precursor cell asymmetry by targeting germline proteins for destruction if expressed in non-germline cells. As part of the CBC(fem-1) complex directs ubiquitination of tra-1. As part of the CBC(lrr-1) complex, required for the ubiquitination and dissasembly of the CMG helicase complex from chromatin at the end of DNA replication. Positive cell-cycle regulator that is required at two distinct points in the cell cycle; the G1-to-S-phase transition and mitosis. Also required for proper cytoskeletal movement and mitotic chromosome condensation. In Caenorhabditis elegans, this protein is Cullin-2.